The primary structure comprises 95 residues: Large ribosomal subunit protein uL23 (95 aa).

The protein belongs to the universal ribosomal protein uL23 family. As to quaternary structure, part of the 50S ribosomal subunit. Contacts protein L29, and trigger factor when it is bound to the ribosome.

Its function is as follows. One of the early assembly proteins it binds 23S rRNA. One of the proteins that surrounds the polypeptide exit tunnel on the outside of the ribosome. Forms the main docking site for trigger factor binding to the ribosome. In Geobacillus kaustophilus (strain HTA426), this protein is Large ribosomal subunit protein uL23.